Consider the following 174-residue polypeptide: 3-hydroxydecanoyl-[acyl-carrier-protein] dehydratase (174 aa).

H71 is a catalytic residue.

Belongs to the thioester dehydratase family. FabA subfamily. In terms of assembly, homodimer.

Its subcellular location is the cytoplasm. The catalysed reaction is a (3R)-hydroxyacyl-[ACP] = a (2E)-enoyl-[ACP] + H2O. It carries out the reaction (3R)-hydroxydecanoyl-[ACP] = (2E)-decenoyl-[ACP] + H2O. It catalyses the reaction (2E)-decenoyl-[ACP] = (3Z)-decenoyl-[ACP]. Its pathway is lipid metabolism; fatty acid biosynthesis. Necessary for the introduction of cis unsaturation into fatty acids. Catalyzes the dehydration of (3R)-3-hydroxydecanoyl-ACP to E-(2)-decenoyl-ACP and then its isomerization to Z-(3)-decenoyl-ACP. Can catalyze the dehydratase reaction for beta-hydroxyacyl-ACPs with saturated chain lengths up to 16:0, being most active on intermediate chain length. This is 3-hydroxydecanoyl-[acyl-carrier-protein] dehydratase from Nitrobacter hamburgensis (strain DSM 10229 / NCIMB 13809 / X14).